The chain runs to 344 residues: Phenylalanine--tRNA ligase alpha subunit (344 aa).

E258 lines the Mg(2+) pocket.

Belongs to the class-II aminoacyl-tRNA synthetase family. Phe-tRNA synthetase alpha subunit type 1 subfamily. Tetramer of two alpha and two beta subunits. Mg(2+) serves as cofactor.

The protein resides in the cytoplasm. It carries out the reaction tRNA(Phe) + L-phenylalanine + ATP = L-phenylalanyl-tRNA(Phe) + AMP + diphosphate + H(+). This is Phenylalanine--tRNA ligase alpha subunit from Thiobacillus denitrificans (strain ATCC 25259 / T1).